The chain runs to 510 residues: Monocarboxylate transporter 14 (510 aa).

The Cytoplasmic portion of the chain corresponds to 1-27 (MYTSHEDIGYDFEDGPKDKKTLKPHPN). A run of 6 helical transmembrane segments spans residues 28–48 (IDGG…ILIM), 74–94 (WVSS…GLFI), 103–123 (AIIG…AANV), 127–147 (FITF…PAVV), 159–179 (LAQG…TVLL), and 191–209 (AMLI…GALM). The disordered stretch occupies residues 214-255 (PGKNPNDPGEKDVRGLPAHSTESVKSTGQQGRTEEKDGGLGN). Over residues 233-244 (STESVKSTGQQG) the composition is skewed to polar residues. Helical transmembrane passes span 315 to 335 (MFVA…IPFI), 353 to 373 (FPLT…LGVI), 379 to 399 (ISVW…IFIL), 408 to 428 (LAVI…MPVV), 443 to 463 (GIII…AGWI), and 474 to 494 (FYIC…QPCI). The Cytoplasmic portion of the chain corresponds to 495–510 (RIIEQSRRKYMDGAHV).

This sequence belongs to the major facilitator superfamily. Monocarboxylate porter (TC 2.A.1.13) family.

The protein resides in the cell membrane. Proton-linked monocarboxylate transporter. May catalyze the transport of monocarboxylates across the plasma membrane. This Homo sapiens (Human) protein is Monocarboxylate transporter 14 (SLC16A14).